A 357-amino-acid polypeptide reads, in one-letter code: Peptide chain release factor 1 (357 aa).

The residue at position 232 (Gln232) is an N5-methylglutamine.

This sequence belongs to the prokaryotic/mitochondrial release factor family. In terms of processing, methylated by PrmC. Methylation increases the termination efficiency of RF1.

The protein resides in the cytoplasm. Its function is as follows. Peptide chain release factor 1 directs the termination of translation in response to the peptide chain termination codons UAG and UAA. This is Peptide chain release factor 1 from Nitratidesulfovibrio vulgaris (strain ATCC 29579 / DSM 644 / CCUG 34227 / NCIMB 8303 / VKM B-1760 / Hildenborough) (Desulfovibrio vulgaris).